The primary structure comprises 208 residues: Protein-methionine-sulfoxide reductase heme-binding subunit MsrQ (208 aa).

6 helical membrane-spanning segments follow: residues 16–36 (IAVF…FVGG), 53–73 (WGLI…LWGW), 82–102 (MVGL…IGLD), 118–138 (TYIT…VTST), 156–176 (LVYP…KADL), and 178–198 (EPLI…VPAV).

This sequence belongs to the MsrQ family. Heterodimer of a catalytic subunit (MsrP) and a heme-binding subunit (MsrQ). FMN serves as cofactor. Requires heme b as cofactor.

Its subcellular location is the cell inner membrane. Functionally, part of the MsrPQ system that repairs oxidized periplasmic proteins containing methionine sulfoxide residues (Met-O), using respiratory chain electrons. Thus protects these proteins from oxidative-stress damage caused by reactive species of oxygen and chlorine generated by the host defense mechanisms. MsrPQ is essential for the maintenance of envelope integrity under bleach stress, rescuing a wide series of structurally unrelated periplasmic proteins from methionine oxidation. MsrQ provides electrons for reduction to the reductase catalytic subunit MsrP, using the quinone pool of the respiratory chain. The protein is Protein-methionine-sulfoxide reductase heme-binding subunit MsrQ of Rhodospirillum rubrum (strain ATCC 11170 / ATH 1.1.1 / DSM 467 / LMG 4362 / NCIMB 8255 / S1).